Reading from the N-terminus, the 30-residue chain is rRNA N-glycosylase (30 aa).

The protein belongs to the ribosome-inactivating protein family. Type 1 RIP subfamily. Expressed in seeds.

It catalyses the reaction Endohydrolysis of the N-glycosidic bond at one specific adenosine on the 28S rRNA.. Functionally, exhibits N-glycosylase activity. Catalyzes the release of one adenine from a ribosome. Acts as a ribosome-inactivating protein and inhibits protein synthesis in a rabbit-reticulocyte lysate system and in various cell lines (in vitro). The polypeptide is rRNA N-glycosylase (Saponaria ocymoides (Rock soapwort)).